A 212-amino-acid chain; its full sequence is 3-isopropylmalate dehydratase small subunit 2 (212 aa).

Belongs to the LeuD family. LeuD type 1 subfamily. Heterodimer of LeuC and LeuD.

The catalysed reaction is (2R,3S)-3-isopropylmalate = (2S)-2-isopropylmalate. Its pathway is amino-acid biosynthesis; L-leucine biosynthesis; L-leucine from 3-methyl-2-oxobutanoate: step 2/4. Catalyzes the isomerization between 2-isopropylmalate and 3-isopropylmalate, via the formation of 2-isopropylmaleate. In Chromobacterium violaceum (strain ATCC 12472 / DSM 30191 / JCM 1249 / CCUG 213 / NBRC 12614 / NCIMB 9131 / NCTC 9757 / MK), this protein is 3-isopropylmalate dehydratase small subunit 2.